The chain runs to 619 residues: Dihydroxy-acid dehydratase (619 aa).

Mg(2+) is bound at residue Asp81. Cys122 serves as a coordination point for [2Fe-2S] cluster. Mg(2+) contacts are provided by Asp123 and Lys124. Lys124 carries the N6-carboxylysine modification. Cys195 contacts [2Fe-2S] cluster. Position 491 (Glu491) interacts with Mg(2+). Ser517 acts as the Proton acceptor in catalysis.

Belongs to the IlvD/Edd family. Homodimer. The cofactor is [2Fe-2S] cluster. Mg(2+) is required as a cofactor.

The catalysed reaction is (2R)-2,3-dihydroxy-3-methylbutanoate = 3-methyl-2-oxobutanoate + H2O. It catalyses the reaction (2R,3R)-2,3-dihydroxy-3-methylpentanoate = (S)-3-methyl-2-oxopentanoate + H2O. The protein operates within amino-acid biosynthesis; L-isoleucine biosynthesis; L-isoleucine from 2-oxobutanoate: step 3/4. Its pathway is amino-acid biosynthesis; L-valine biosynthesis; L-valine from pyruvate: step 3/4. In terms of biological role, functions in the biosynthesis of branched-chain amino acids. Catalyzes the dehydration of (2R,3R)-2,3-dihydroxy-3-methylpentanoate (2,3-dihydroxy-3-methylvalerate) into 2-oxo-3-methylpentanoate (2-oxo-3-methylvalerate) and of (2R)-2,3-dihydroxy-3-methylbutanoate (2,3-dihydroxyisovalerate) into 2-oxo-3-methylbutanoate (2-oxoisovalerate), the penultimate precursor to L-isoleucine and L-valine, respectively. This Rhodopseudomonas palustris (strain HaA2) protein is Dihydroxy-acid dehydratase.